The following is a 23-amino-acid chain: NADP-dependent malic enzyme (23 aa).

It belongs to the malic enzymes family. In terms of assembly, homotetramer.

It catalyses the reaction (S)-malate + NADP(+) = pyruvate + CO2 + NADPH. The enzyme catalyses oxaloacetate + H(+) = pyruvate + CO2. This chain is NADP-dependent malic enzyme, found in Populus euphratica (Euphrates poplar).